The primary structure comprises 540 residues: Glucose-6-phosphate isomerase (540 aa).

The Proton donor role is filled by Glu-350. Residues His-381 and Lys-503 contribute to the active site.

It belongs to the GPI family.

The protein localises to the cytoplasm. It catalyses the reaction alpha-D-glucose 6-phosphate = beta-D-fructose 6-phosphate. It participates in carbohydrate biosynthesis; gluconeogenesis. Its pathway is carbohydrate degradation; glycolysis; D-glyceraldehyde 3-phosphate and glycerone phosphate from D-glucose: step 2/4. Its function is as follows. Catalyzes the reversible isomerization of glucose-6-phosphate to fructose-6-phosphate. In Burkholderia mallei (strain NCTC 10247), this protein is Glucose-6-phosphate isomerase.